The following is a 359-amino-acid chain: Ferredoxin--NADP reductase (359 aa).

FAD-binding residues include Asp48, Gln56, Tyr61, Ala101, Phe139, Asp304, and Ser345. The disordered stretch occupies residues 340–359; sequence VHTHTSNDTNLQSRLHAAAE. Polar residues predominate over residues 341–352; that stretch reads HTHTSNDTNLQS.

Belongs to the ferredoxin--NADP reductase type 2 family. Homodimer. Requires FAD as cofactor.

The catalysed reaction is 2 reduced [2Fe-2S]-[ferredoxin] + NADP(+) + H(+) = 2 oxidized [2Fe-2S]-[ferredoxin] + NADPH. The polypeptide is Ferredoxin--NADP reductase (Ralstonia nicotianae (strain ATCC BAA-1114 / GMI1000) (Ralstonia solanacearum)).